Reading from the N-terminus, the 202-residue chain is N-acetyltransferase 9-like protein (202 aa).

One can recognise an N-acetyltransferase domain in the interval 34–184 (EEIRRLTGSE…FTFELPKNRL (151 aa)).

Belongs to the acetyltransferase family. GNAT subfamily.

This Caenorhabditis elegans protein is N-acetyltransferase 9-like protein.